We begin with the raw amino-acid sequence, 234 residues long: Ubiquitin carboxyl-terminal hydrolase 3 (234 aa).

The 221-residue stretch at Arg12–Lys232 folds into the UCH catalytic domain. The active-site Nucleophile is the Cys101. His172 functions as the Proton donor in the catalytic mechanism.

The protein belongs to the peptidase C12 family.

The catalysed reaction is Thiol-dependent hydrolysis of ester, thioester, amide, peptide and isopeptide bonds formed by the C-terminal Gly of ubiquitin (a 76-residue protein attached to proteins as an intracellular targeting signal).. In Arabidopsis thaliana (Mouse-ear cress), this protein is Ubiquitin carboxyl-terminal hydrolase 3.